A 241-amino-acid chain; its full sequence is tRNA pseudouridine synthase A (241 aa).

Residue Asp52 is the Nucleophile of the active site. Substrate is bound at residue Tyr111.

It belongs to the tRNA pseudouridine synthase TruA family. As to quaternary structure, homodimer.

The enzyme catalyses uridine(38/39/40) in tRNA = pseudouridine(38/39/40) in tRNA. Functionally, formation of pseudouridine at positions 38, 39 and 40 in the anticodon stem and loop of transfer RNAs. The protein is tRNA pseudouridine synthase A of Ureaplasma parvum serovar 3 (strain ATCC 27815 / 27 / NCTC 11736).